We begin with the raw amino-acid sequence, 128 residues long: Protein BEX1 (128 aa).

Positions 1-55 (MESKDQGAKNLNMENDHQKKEEKEEKPQDTIKREPVVAPTFEAGKNCAPRGGRRR) are disordered. Residues 14-35 (ENDHQKKEEKEEKPQDTIKREP) are compositionally biased toward basic and acidic residues. Serine 105 carries the post-translational modification Phosphoserine; by PKB/AKT1. Residues 107–128 (SLRAVSTDPPHHDHHDEFCLMP) form a disordered region. The span at 115 to 128 (PPHHDHHDEFCLMP) shows a compositional bias: basic and acidic residues. The segment at 117 to 121 (HHDHH) is his cluster. Position 125 (cysteine 125) interacts with Zn(2+).

Belongs to the BEX family. As to quaternary structure, interacts with neurotrophin receptor p75NTR/NGFR. Interacts with OMP. Phosphorylated. Phosphorylation of Ser-105 protects it from the proteasome. Post-translationally, ubiquitinated. Degraded by the proteasome. Expressed in the central nervous system. Expressed in Schwann cells from newborn sciatic nerve.

The protein localises to the nucleus. It localises to the cytoplasm. Functionally, signaling adapter molecule involved in p75NTR/NGFR signaling. Plays a role in cell cycle progression and neuronal differentiation. Inhibits neuronal differentiation in response to nerve growth factor (NGF). May act as a link between the cell cycle and neurotrophic factor signaling, possibly by functioning as an upstream modulator of receptor signaling, coordinating biological responses to external signals with internal cellular states. In absence of reductive stress, acts as a pseudosubstrate for the CRL2(FEM1B) complex: associates with FEM1B via zinc, thereby preventing association between FEM1B and its substrates. The sequence is that of Protein BEX1 (Bex1) from Rattus norvegicus (Rat).